A 233-amino-acid polypeptide reads, in one-letter code: 7-cyano-7-deazaguanine synthase (233 aa).

7-17 (LSGGLDSAVTS) is an ATP binding site. Zn(2+) is bound by residues Cys195, Cys206, Cys209, and Cys212.

Belongs to the QueC family. The cofactor is Zn(2+).

It carries out the reaction 7-carboxy-7-deazaguanine + NH4(+) + ATP = 7-cyano-7-deazaguanine + ADP + phosphate + H2O + H(+). It participates in purine metabolism; 7-cyano-7-deazaguanine biosynthesis. Its function is as follows. Catalyzes the ATP-dependent conversion of 7-carboxy-7-deazaguanine (CDG) to 7-cyano-7-deazaguanine (preQ(0)). The sequence is that of 7-cyano-7-deazaguanine synthase from Methanococcus maripaludis (strain C5 / ATCC BAA-1333).